The following is a 535-amino-acid chain: Dual specificity calcium/calmodulin-dependent 3',5'-cyclic nucleotide phosphodiesterase 1A (535 aa).

2 calmodulin-binding regions span residues 24 to 44 (TEKM…QLER) and 114 to 137 (EKPK…MYRK). One can recognise a PDEase domain in the interval 142 to 522 (VGLAYPAAVI…ERWKELAAQE (381 aa)). His219 functions as the Proton donor in the catalytic mechanism. Residues His223, His259, Asp260, and Asp366 each contribute to the Zn(2+) site. Asp260 provides a ligand contact to Mg(2+).

It belongs to the cyclic nucleotide phosphodiesterase family. PDE1 subfamily. In terms of assembly, homodimer. Interacts with YWHAZ. Zn(2+) serves as cofactor. The cofactor is Mg(2+). As to expression, several tissues, including brain, kidney, testes and heart.

It carries out the reaction a nucleoside 3',5'-cyclic phosphate + H2O = a nucleoside 5'-phosphate + H(+). The enzyme catalyses 3',5'-cyclic GMP + H2O = GMP + H(+). The catalysed reaction is 3',5'-cyclic AMP + H2O = AMP + H(+). Its activity is regulated as follows. Type I PDE are activated by the binding of calmodulin in the presence of Ca(2+). Functionally, calcium/calmodulin-dependent cyclic nucleotide phosphodiesterase with a dual specificity for the second messengers cGMP and cAMP, which are key regulators of many important physiological processes. Has a higher efficiency with cGMP compared to cAMP. In Homo sapiens (Human), this protein is Dual specificity calcium/calmodulin-dependent 3',5'-cyclic nucleotide phosphodiesterase 1A.